The primary structure comprises 581 residues: Adenine deaminase (581 aa).

Belongs to the metallo-dependent hydrolases superfamily. Adenine deaminase family. Mn(2+) is required as a cofactor.

The enzyme catalyses adenine + H2O + H(+) = hypoxanthine + NH4(+). This chain is Adenine deaminase, found in Brucella suis biovar 1 (strain 1330).